Here is a 273-residue protein sequence, read N- to C-terminus: Undecaprenyl-diphosphatase (273 aa).

The next 7 membrane-spanning stretches (helical) occupy residues 39–59 (SGLT…VVYF), 86–106 (LPFL…LFET), 117–137 (LLIG…DLFG), 146–166 (VTVS…IPGV), 189–209 (FSFL…MLHL), 220–240 (LPLA…VAFL), and 249–269 (IAPF…VILT).

It belongs to the UppP family.

The protein localises to the cell inner membrane. The catalysed reaction is di-trans,octa-cis-undecaprenyl diphosphate + H2O = di-trans,octa-cis-undecaprenyl phosphate + phosphate + H(+). Its function is as follows. Catalyzes the dephosphorylation of undecaprenyl diphosphate (UPP). Confers resistance to bacitracin. The protein is Undecaprenyl-diphosphatase of Pelobacter propionicus (strain DSM 2379 / NBRC 103807 / OttBd1).